The sequence spans 283 residues: MQLFNAVRNIGKAHLKYNQEARQKVPDGLWVACPKCQQSIYHKDLGYYRTCPVCQYGFRTRAKVRLDWLVDSFEPAGDLAQTPNPLHFPKYPQKLRKAQQITGLEDSILTGVATIKQQKFALGIMDPYFIMGSMGSATGEKITRLFELATEKGLPVILIAASGGARMQEGIFSLMQMAKTSAAVKQHAEQGLLYISLLTDPTTGGVTASFATEADIILAEPKAVIGFAGRRVIEQTMHEQIAPDLQDAETVLKNGFIDQIVARQDQKKVLHQLLKLHERGAHY.

In terms of domain architecture, CoA carboxyltransferase N-terminal spans 29 to 283; that stretch reads LWVACPKCQQ…LKLHERGAHY (255 aa). Zn(2+) is bound by residues cysteine 33, cysteine 36, cysteine 51, and cysteine 54. The segment at 33–54 adopts a C4-type zinc-finger fold; sequence CPKCQQSIYHKDLGYYRTCPVC.

This sequence belongs to the AccD/PCCB family. Acetyl-CoA carboxylase is a heterohexamer composed of biotin carboxyl carrier protein (AccB), biotin carboxylase (AccC) and two subunits each of ACCase subunit alpha (AccA) and ACCase subunit beta (AccD). It depends on Zn(2+) as a cofactor.

Its subcellular location is the cytoplasm. It catalyses the reaction N(6)-carboxybiotinyl-L-lysyl-[protein] + acetyl-CoA = N(6)-biotinyl-L-lysyl-[protein] + malonyl-CoA. Its pathway is lipid metabolism; malonyl-CoA biosynthesis; malonyl-CoA from acetyl-CoA: step 1/1. Component of the acetyl coenzyme A carboxylase (ACC) complex. Biotin carboxylase (BC) catalyzes the carboxylation of biotin on its carrier protein (BCCP) and then the CO(2) group is transferred by the transcarboxylase to acetyl-CoA to form malonyl-CoA. The protein is Acetyl-coenzyme A carboxylase carboxyl transferase subunit beta of Latilactobacillus sakei subsp. sakei (strain 23K) (Lactobacillus sakei subsp. sakei).